Reading from the N-terminus, the 471-residue chain is 6-phosphogluconate dehydrogenase, decarboxylating (471 aa).

NADP(+) contacts are provided by residues 10-15 (GLAVMG), 33-35 (NRT), 75-77 (VKA), and Asn-103. Substrate is bound by residues Asn-103 and 129–131 (SGG). Lys-183 (proton acceptor) is an active-site residue. Position 186–187 (186–187 (HN)) interacts with substrate. Glu-190 acts as the Proton donor in catalysis. The substrate site is built by Tyr-191, Lys-263, Arg-290, Arg-449, and His-455.

The protein belongs to the 6-phosphogluconate dehydrogenase family. As to quaternary structure, homodimer.

It carries out the reaction 6-phospho-D-gluconate + NADP(+) = D-ribulose 5-phosphate + CO2 + NADPH. The protein operates within carbohydrate degradation; pentose phosphate pathway; D-ribulose 5-phosphate from D-glucose 6-phosphate (oxidative stage): step 3/3. Its function is as follows. Catalyzes the oxidative decarboxylation of 6-phosphogluconate to ribulose 5-phosphate and CO(2), with concomitant reduction of NADP to NADPH. This is 6-phosphogluconate dehydrogenase, decarboxylating (gnd) from Synechococcus elongatus (strain ATCC 33912 / PCC 7942 / FACHB-805) (Anacystis nidulans R2).